Consider the following 190-residue polypeptide: Hypoxanthine/guanine phosphoribosyltransferase (190 aa).

The protein belongs to the purine/pyrimidine phosphoribosyltransferase family. Archaeal HPRT subfamily. As to quaternary structure, homodimer.

It is found in the cytoplasm. The catalysed reaction is IMP + diphosphate = hypoxanthine + 5-phospho-alpha-D-ribose 1-diphosphate. It catalyses the reaction GMP + diphosphate = guanine + 5-phospho-alpha-D-ribose 1-diphosphate. The protein operates within purine metabolism; IMP biosynthesis via salvage pathway; IMP from hypoxanthine: step 1/1. In terms of biological role, catalyzes a salvage reaction resulting in the formation of IMP that is energically less costly than de novo synthesis. The protein is Hypoxanthine/guanine phosphoribosyltransferase of Methanohalobium evestigatum (strain ATCC BAA-1072 / DSM 3721 / NBRC 107634 / OCM 161 / Z-7303).